The primary structure comprises 385 residues: Isocitrate dehydrogenase [NAD] subunit beta, mitochondrial (385 aa).

A mitochondrion-targeting transit peptide spans 1 to 33; sequence MAALSRVRWLTRALVAAPNPGAWRSLCTSTVAQ. At lysine 199 the chain carries N6-acetyllysine.

It belongs to the isocitrate and isopropylmalate dehydrogenases family. In terms of assembly, heterooligomer of subunits alpha (IDH3A), beta (IDH3B), and gamma (IDH3G) in the apparent ratio of 2:1:1. The heterodimer containing one IDH3A and one IDH3B subunit and the heterodimer containing one IDH3A and one IDH3G subunit assemble into a heterotetramer (which contains two subunits of IDH3A, one of IDH3B and one of IDH3G) and further into the heterooctamer. In terms of tissue distribution, isoform A is predominant in heart muscle; also found in brain, kidney and liver. Isoform B is present in kidney and liver.

It localises to the mitochondrion. Its activity is regulated as follows. The heterotetramer and the heterodimer composed of IDH3A and IDH3G subunits can be allosterically activated by citrate (CIT) or/and ADP, and the two activators can act independently or synergistically. The heterodimer composed of IDH3A and IDH3B subunits cannot be allosterically regulated and the allosteric regulation of the heterotetramer is through the IDH3G subunit and not the IDH3B subunit. The IDH3G subunit contains the allosteric site which consists of a CIT-binding site and an ADP-binding site, and the binding of CIT and ADP causes conformational changes at the allosteric site which are transmitted to the active site in the catalytic subunit (IDH3A) through a cascade of conformational changes at the heterodimer interface, leading to stabilization of the isocitrate-binding at the active site and thus activation of the enzyme. ATP can activate the heterotetramer and the heterodimer composed of IDH3A and IDH3G subunits at low concentrations but inhibits their activities at high concentrations, whereas ATP exhibits only inhibitory effect on the heterodimer composed of IDH3A and IDH3B subunits. Its function is as follows. Plays a structural role to facilitate the assembly and ensure the full activity of the enzyme catalyzing the decarboxylation of isocitrate (ICT) into alpha-ketoglutarate. The heterodimer composed of the alpha (IDH3A) and beta (IDH3B) subunits and the heterodimer composed of the alpha (IDH3A) and gamma (IDH3G) subunits, have considerable basal activity but the full activity of the heterotetramer (containing two subunits of IDH3A, one of IDH3B and one of IDH3G) requires the assembly and cooperative function of both heterodimers. The chain is Isocitrate dehydrogenase [NAD] subunit beta, mitochondrial (IDH3B) from Bos taurus (Bovine).